A 94-amino-acid chain; its full sequence is RING finger protein Z (94 aa).

The segment at 1–22 (MGNCNKPPKRPPNTQTSAAQPS) is disordered. Residue Gly2 is the site of N-myristoyl glycine; by host attachment. The RING-type; atypical zinc finger occupies 39 to 75 (CKCCWFADTNLITCNDHYLCLRCHQTMLRNSELCHIC). Residues 89 to 92 (PSAP) carry the PTAP/PSAP motif motif.

Belongs to the arenaviridae Z protein family. As to quaternary structure, interacts with protein NP; this interaction probably directs the encapsidated genome to budding sites. Interacts (via RING domain) with polymerase L; this interaction inhibits viral transcription and replication, Z partially blocks the product exit tunnel for the releasing nascent RNA product. Interacts with the glycoprotein complex; this interaction plays a role in virion budding. Interacts with host eIF4E; this interaction results in eIF4E reduced affinity for its substrate, the 5'-m7 G cap structure. Interacts (via late-budding domain) with host TSG101; this interaction is essential for budding and release of viral particles. Interacts with host RPLP0; this interaction may serve to load ribosome-like particles inside the virion. Interacts with host PML; this interaction induces PML bodies redistribution in the cytoplasm upon viral infection. In terms of processing, myristoylation is required for the role of RING finger protein Z in assembly and budding.

It localises to the virion. The protein resides in the host cytoplasm. The protein localises to the host perinuclear region. Its subcellular location is the host cell membrane. Its function is as follows. Plays a crucial role in virion assembly and budding. Expressed late in the virus life cycle, it acts as an inhibitor of viral transcription and RNA synthesis by interacting with the viral polymerase L. Presumably recruits the NP encapsidated genome to cellular membranes at budding sites via direct interaction with NP. Plays critical roles in the final steps of viral release by interacting with host TSG101, a member of the vacuolar protein-sorting pathway and using other cellular host proteins involved in vesicle formation pathway. The budding of the virus progeny occurs after association of protein Z with the viral glycoprotein complex SSP-GP1-GP2 at the cell periphery, step that requires myristoylation of protein Z. Also selectively represses protein production by associating with host eIF4E. In cell-based minigenome assay, has an inhibitory effect on the ribonucleoprotein machinery (vRNP), which is responsible for the replication and transcription of the viral genome. In Calomys callosus (Large vesper mouse), this protein is RING finger protein Z.